Here is a 579-residue protein sequence, read N- to C-terminus: Probable methyl-accepting chemotaxis protein BT9727_0355 (579 aa).

Over 1-13 (MKKYWHKLSFLQK) the chain is Cytoplasmic. A helical membrane pass occupies residues 14-34 (NVLLTVLVILTLVGTMGALSF). Residues 35-198 (NMFQNSMMSI…ASIVPSTKEK (164 aa)) lie on the Extracellular side of the membrane. Residues 199–219 (FIIQGLMFICISVLIATVIQF) form a helical membrane-spanning segment. Topologically, residues 220-579 (LIVRNALAPL…LQELIGEFKS (360 aa)) are cytoplasmic. The HAMP domain occupies 223–274 (RNALAPLRDLREGLRRVGEGDLNIKLEERSDDIGIINSYFNNTIEKFKGIID). At Glu-289 the chain carries Glutamate methyl ester (Glu). Positions 293-529 (STKENSMAVQ…NIVRVVNELS (237 aa)) constitute a Methyl-accepting transducer domain. At Glu-548 the chain carries Glutamate methyl ester (Glu).

The protein belongs to the methyl-accepting chemotaxis (MCP) protein family.

It is found in the cell membrane. Its function is as follows. Chemotactic-signal transducers respond to changes in the concentration of attractants and repellents in the environment, transduce a signal from the outside to the inside of the cell, and facilitate sensory adaptation through the variation of the level of methylation. This Bacillus thuringiensis subsp. konkukian (strain 97-27) protein is Probable methyl-accepting chemotaxis protein BT9727_0355.